The chain runs to 136 residues: MASLNKMQLIGNLGADPDIRYMQDGTPTVTVSVATTDTWKDKDTGNKEEKTEWHRVVFFGGLAEIVGEFLKKGSQIYVEGALRSRNWTDKEGNKRYTTEIMAKEMQMLGKKQDNNKVGNARHGDALPADEDDYYDF.

An SSB domain is found at 4 to 109 (LNKMQLIGNL…IMAKEMQMLG (106 aa)). Positions 109–136 (GKKQDNNKVGNARHGDALPADEDDYYDF) are disordered. Over residues 127–136 (PADEDDYYDF) the composition is skewed to acidic residues.

Homotetramer.

This Xylella fastidiosa (strain 9a5c) protein is Single-stranded DNA-binding protein 1 (ssb1).